Reading from the N-terminus, the 109-residue chain is Stress-response A/B barrel domain-containing protein HS1 (109 aa).

The 95-residue stretch at 8-102 (VKHVLLASFK…SLDKVLVIDY (95 aa)) folds into the Stress-response A/B barrel domain. Positions 36, 39, 40, and 42 each coordinate Mg(2+).

As to quaternary structure, homodimer. Requires Mg(2+) as cofactor.

Heat stable protein involved in defense against fungal pathogens. Possesses antifungal activity against diverse pathogenic fungi. Possesses antimicrobial activity. Possesses ribonuclease activity. The protein is Stress-response A/B barrel domain-containing protein HS1 of Arabidopsis thaliana (Mouse-ear cress).